The following is a 208-amino-acid chain: Harpin secretion protein HrpW (208 aa).

The next 4 helical transmembrane spans lie at 2 to 22 (LALF…CTAF), 46 to 66 (ALYG…AHDI), 149 to 169 (IGFL…NLLL), and 176 to 196 (VSPM…VSGW).

It belongs to the FliP/MopC/SpaP family.

It localises to the cell membrane. Required for the secretion of harpin. The polypeptide is Harpin secretion protein HrpW (hrpW) (Pseudomonas syringae pv. syringae).